Consider the following 240-residue polypeptide: Lactate utilization protein C (240 aa).

This sequence belongs to the LutC/YkgG family.

In terms of biological role, is involved in L-lactate degradation and allows cells to grow with lactate as the sole carbon source. This chain is Lactate utilization protein C, found in Bacillus licheniformis (strain ATCC 14580 / DSM 13 / JCM 2505 / CCUG 7422 / NBRC 12200 / NCIMB 9375 / NCTC 10341 / NRRL NRS-1264 / Gibson 46).